We begin with the raw amino-acid sequence, 676 residues long: Genetic interactor of prohibitins 3, mitochondrial (676 aa).

The transit peptide at 1–48 directs the protein to the mitochondrion; that stretch reads MIRYSGFSVVRSCLSRTFSRNNSALSTAITSSLLTNLFPTCKSCGVRL. Basic and acidic residues predominate over residues 98–110; the sequence is SKKVSDSESRSES. The tract at residues 98–117 is disordered; sequence SKKVSDSESRSESQDLSNEA. The CP-type G domain occupies 180 to 395; sequence LELLDNIMSR…IYDVPGFVNS (216 aa).

Belongs to the TRAFAC class YlqF/YawG GTPase family. GEP3 subfamily.

It localises to the mitochondrion. In terms of biological role, may be involved in the mitochondrial lipid metabolism. The polypeptide is Genetic interactor of prohibitins 3, mitochondrial (GEP3) (Scheffersomyces stipitis (strain ATCC 58785 / CBS 6054 / NBRC 10063 / NRRL Y-11545) (Yeast)).